Reading from the N-terminus, the 253-residue chain is Triosephosphate isomerase (253 aa).

Asparagine 9 to lysine 11 serves as a coordination point for substrate. The active-site Electrophile is the histidine 95. Glutamate 167 acts as the Proton acceptor in catalysis. Substrate contacts are provided by residues glycine 173, serine 213, and glycine 234 to glycine 235. Serine 213 is modified (phosphoserine).

The protein belongs to the triosephosphate isomerase family. As to quaternary structure, homodimer.

The protein resides in the cytoplasm. It carries out the reaction D-glyceraldehyde 3-phosphate = dihydroxyacetone phosphate. Its pathway is carbohydrate biosynthesis; gluconeogenesis. It participates in carbohydrate degradation; glycolysis; D-glyceraldehyde 3-phosphate from glycerone phosphate: step 1/1. Involved in the gluconeogenesis. Catalyzes stereospecifically the conversion of dihydroxyacetone phosphate (DHAP) to D-glyceraldehyde-3-phosphate (G3P). The chain is Triosephosphate isomerase from Lysinibacillus sphaericus (strain C3-41).